The sequence spans 514 residues: 2-isopropylmalate synthase (514 aa).

The region spanning 5–268 is the Pyruvate carboxyltransferase domain; the sequence is LIIFDTTLRD…DVGIDTTQIV (264 aa). The Mn(2+) site is built by D14, H202, H204, and N239. A regulatory domain region spans residues 395–514; it reads KFVSLSQRSE…KDDKLNPQRA (120 aa).

The protein belongs to the alpha-IPM synthase/homocitrate synthase family. LeuA type 1 subfamily. As to quaternary structure, homodimer. Requires Mn(2+) as cofactor.

Its subcellular location is the cytoplasm. It catalyses the reaction 3-methyl-2-oxobutanoate + acetyl-CoA + H2O = (2S)-2-isopropylmalate + CoA + H(+). Its pathway is amino-acid biosynthesis; L-leucine biosynthesis; L-leucine from 3-methyl-2-oxobutanoate: step 1/4. Its function is as follows. Catalyzes the condensation of the acetyl group of acetyl-CoA with 3-methyl-2-oxobutanoate (2-ketoisovalerate) to form 3-carboxy-3-hydroxy-4-methylpentanoate (2-isopropylmalate). In Burkholderia cenocepacia (strain HI2424), this protein is 2-isopropylmalate synthase.